The following is a 201-amino-acid chain: Large ribosomal subunit protein uL18 (201 aa).

This sequence belongs to the universal ribosomal protein uL18 family. Part of the 50S ribosomal subunit. Contacts the 5S and 23S rRNAs.

In terms of biological role, this is one of the proteins that bind and probably mediate the attachment of the 5S RNA into the large ribosomal subunit, where it forms part of the central protuberance. In Thermococcus kodakarensis (strain ATCC BAA-918 / JCM 12380 / KOD1) (Pyrococcus kodakaraensis (strain KOD1)), this protein is Large ribosomal subunit protein uL18.